We begin with the raw amino-acid sequence, 683 residues long: Glycine--tRNA ligase beta subunit (683 aa).

It belongs to the class-II aminoacyl-tRNA synthetase family. In terms of assembly, tetramer of two alpha and two beta subunits.

It is found in the cytoplasm. The enzyme catalyses tRNA(Gly) + glycine + ATP = glycyl-tRNA(Gly) + AMP + diphosphate. The polypeptide is Glycine--tRNA ligase beta subunit (Pseudomonas putida (strain GB-1)).